The sequence spans 277 residues: Deoxyguanosine kinase, mitochondrial (277 aa).

A mitochondrion-targeting transit peptide spans 1-39 (MAAGRFLLRRLRASFRSPLRNALVDAPHARAMHDGGGPR). 45–53 (GNIAVGKST) contributes to the ATP binding site. The substrate site is built by Glu-70, Tyr-100, Gln-111, and Arg-118. Glu-141 acts as the Proton acceptor in catalysis. Positions 142 and 147 each coordinate substrate. Residue 206 to 208 (RDR) participates in ATP binding. Substrate is bound at residue Glu-211. Residue 254 to 256 (EDF) participates in ATP binding.

Belongs to the DCK/DGK family. As to quaternary structure, homodimer. As to expression, spleen and thymus. Expressed at much lower levels in the brain and liver.

Its subcellular location is the mitochondrion. The protein localises to the cytoplasm. It carries out the reaction 2'-deoxyguanosine + ATP = dGMP + ADP + H(+). It catalyses the reaction 2'-deoxyadenosine + ATP = dAMP + ADP + H(+). In terms of biological role, phosphorylates deoxyguanosine and deoxyadenosine in the mitochondrial matrix, with the highest efficiency for deoxyguanosine. In non-replicating cells, where cytosolic dNTP synthesis is down-regulated, mtDNA synthesis depends solely on DGUOK and TK2. Phosphorylates certain nucleoside analogs. Widely used as target of antiviral and chemotherapeutic agents. The protein is Deoxyguanosine kinase, mitochondrial (Dguok) of Mus musculus (Mouse).